An 837-amino-acid polypeptide reads, in one-letter code: Protein translocase subunit SecA 1 (837 aa).

ATP contacts are provided by residues Gln85, 103 to 107, and Asp492; that span reads GEGKT. Residues 791 to 837 form a disordered region; that stretch reads KGEAINPAEGKPEAKRQPIRKDQHIGRNDPCPCGSGKKYKNCHGKEA. Over residues 800–817 the composition is skewed to basic and acidic residues; the sequence is GKPEAKRQPIRKDQHIGR. Zn(2+) contacts are provided by Cys821, Cys823, Cys832, and His833. The span at 827–837 shows a compositional bias: basic residues; the sequence is KKYKNCHGKEA.

This sequence belongs to the SecA family. In terms of assembly, monomer and homodimer. Part of the essential Sec protein translocation apparatus which comprises SecA, SecYEG and auxiliary proteins SecDF. Other proteins may also be involved. It depends on Zn(2+) as a cofactor.

The protein resides in the cell membrane. It is found in the cytoplasm. The catalysed reaction is ATP + H2O + cellular proteinSide 1 = ADP + phosphate + cellular proteinSide 2.. Functionally, part of the Sec protein translocase complex. Interacts with the SecYEG preprotein conducting channel. Has a central role in coupling the hydrolysis of ATP to the transfer of proteins into and across the cell membrane, serving as an ATP-driven molecular motor driving the stepwise translocation of polypeptide chains across the membrane. In Listeria monocytogenes serovar 1/2a (strain ATCC BAA-679 / EGD-e), this protein is Protein translocase subunit SecA 1.